The primary structure comprises 406 residues: Peptidase T (406 aa).

H78 contributes to the Zn(2+) binding site. The active site involves D80. Zn(2+) is bound at residue D139. The Proton acceptor role is filled by E173. 3 residues coordinate Zn(2+): E174, D196, and H378.

The protein belongs to the peptidase M20B family. Zn(2+) is required as a cofactor.

The protein localises to the cytoplasm. It catalyses the reaction Release of the N-terminal residue from a tripeptide.. Functionally, cleaves the N-terminal amino acid of tripeptides. The polypeptide is Peptidase T (Clostridium perfringens (strain ATCC 13124 / DSM 756 / JCM 1290 / NCIMB 6125 / NCTC 8237 / Type A)).